Here is a 292-residue protein sequence, read N- to C-terminus: MSYIPFPDISPELFSIELFGVTFALRWYALAYIAGLLIGWRLVLRMIRAERLWSFGPPMTEDQLERLLTWVILGVILGGRLGFVLFYQPAHYLAHPLDILKVWEGGMSFHGGFLGVMTALVAFCLKERISILPVADLLAAATPPGLFLGRIANFINAELWGRPTTLPWGVAFPGEAAQSCPGIEGICARHPSQIYEAGLEGILLFAVLSLLVWRRGWLHWPGSVSGMFLAGYGATRFLVEFVRQPDAQFVSAGNPLGLAWQISGYGLTMGQILSLPMILLGLYLILRSRRTA.

Helical transmembrane passes span 18-38 (LFGV…GLLI), 67-87 (LLTW…VLFY), and 105-125 (GGMS…AFCL). An a 1,2-diacyl-sn-glycero-3-phospho-(1'-sn-glycerol)-binding site is contributed by Arg-150. The next 3 helical transmembrane spans lie at 193 to 213 (QIYE…LLVW), 222 to 242 (GSVS…VEFV), and 266 to 286 (GLTM…YLIL).

The protein belongs to the Lgt family.

It localises to the cell inner membrane. The catalysed reaction is L-cysteinyl-[prolipoprotein] + a 1,2-diacyl-sn-glycero-3-phospho-(1'-sn-glycerol) = an S-1,2-diacyl-sn-glyceryl-L-cysteinyl-[prolipoprotein] + sn-glycerol 1-phosphate + H(+). The protein operates within protein modification; lipoprotein biosynthesis (diacylglyceryl transfer). Its function is as follows. Catalyzes the transfer of the diacylglyceryl group from phosphatidylglycerol to the sulfhydryl group of the N-terminal cysteine of a prolipoprotein, the first step in the formation of mature lipoproteins. The chain is Phosphatidylglycerol--prolipoprotein diacylglyceryl transferase from Cereibacter sphaeroides (strain ATCC 17029 / ATH 2.4.9) (Rhodobacter sphaeroides).